Here is a 63-residue protein sequence, read N- to C-terminus: Conotoxin Cal6.28 (63 aa).

The N-terminal stretch at 1–22 is a signal peptide; it reads MKLTCVLIVAVLILTACQVIAA. Cystine bridges form between cysteine 34–cysteine 45, cysteine 37–cysteine 51, and cysteine 44–cysteine 58.

It belongs to the conotoxin O1 superfamily. Expressed by the venom duct.

It is found in the secreted. Probable neurotoxin. The protein is Conotoxin Cal6.28 of Californiconus californicus (California cone).